The chain runs to 110 residues: Ribonuclease P protein component 1 (110 aa).

This sequence belongs to the eukaryotic/archaeal RNase P protein component 1 family. As to quaternary structure, consists of a catalytic RNA component and at least 4-5 protein subunits.

The protein resides in the cytoplasm. The enzyme catalyses Endonucleolytic cleavage of RNA, removing 5'-extranucleotides from tRNA precursor.. Functionally, part of ribonuclease P, a protein complex that generates mature tRNA molecules by cleaving their 5'-ends. This Methanosarcina mazei (strain ATCC BAA-159 / DSM 3647 / Goe1 / Go1 / JCM 11833 / OCM 88) (Methanosarcina frisia) protein is Ribonuclease P protein component 1.